We begin with the raw amino-acid sequence, 105 residues long: Transcription factor S (105 aa).

Zn(2+) is bound by residues Cys5, Cys8, Cys21, Cys24, Cys66, Cys69, Cys94, and Cys97. The C4-type zinc finger occupies 5–24 (CPKCNNIMLPKNGRLKCTVC). Residues 62 to 102 (TRIECPSCGNMEASWWLQQTRCADEPETRFYKCKKCGHTWR) form a TFIIS-type zinc finger.

This sequence belongs to the archaeal RpoM/eukaryotic RPA12/RPB9/RPC11 RNA polymerase family.

Functionally, induces RNA cleavage activity in the RNA polymerase. In its presence, the cleavage activity of the RNA polymerase truncates the RNA back to position +15 in a stepwise manner by releasing mainly dinucleotides from the 3'-end of the nascent RNA. The truncated RNAs are able to continue elongation. Involved in transcriptional proofreading and fidelity. Misincorporation of nucleotides during elongation of transcription leads to arrested elongation complexes which are rescued by TFS-promoted removal of a dinucleotide from the 3'-end. TFS is able to induce a cleavage resynthesis cycle in stalled elongation complexes (resulting from the next missing nucleotide or a reduced incorporation rate of a wrong nucleotide) preventing misincorporation and enabling proofreading in a post-incorporation manner. Pausing of elongation complexes is the main determinant of TFS-induced RNA cleavage. This Methanothermococcus thermolithotrophicus (Methanococcus thermolithotrophicus) protein is Transcription factor S.